Consider the following 235-residue polypeptide: Probable inactive serine protease 37 (235 aa).

An N-terminal signal peptide occupies residues 1–19 (MKYVFYLGVLAGTFFFADS). The Peptidase S1 domain occupies 20–233 (SVQKEDPAPY…YVSWIENTAK (214 aa)). 3 disulfide bridges follow: cysteine 40-cysteine 56, cysteine 131-cysteine 198, and cysteine 163-cysteine 177.

The protein belongs to the peptidase S1 family. As to expression, testis-specific. Expressed in spermatids (at protein level).

It is found in the cytoplasmic vesicle. Its subcellular location is the secretory vesicle. The protein resides in the acrosome. It localises to the secreted. Its function is as follows. Plays a role in male fertility. May have a role in sperm migration or binding to zona-intact eggs. Involved in the activation of the proacrosin/acrosin system. This Homo sapiens (Human) protein is Probable inactive serine protease 37.